An 87-amino-acid chain; its full sequence is Large ribosomal subunit protein bL31B (87 aa).

It belongs to the bacterial ribosomal protein bL31 family. Type B subfamily. Part of the 50S ribosomal subunit.

The polypeptide is Large ribosomal subunit protein bL31B (Escherichia coli O8 (strain IAI1)).